We begin with the raw amino-acid sequence, 88 residues long: DNA-directed RNA polymerase subunit omega (88 aa).

It belongs to the RNA polymerase subunit omega family. In terms of assembly, the RNAP catalytic core consists of 2 alpha, 1 beta, 1 beta' and 1 omega subunit. When a sigma factor is associated with the core the holoenzyme is formed, which can initiate transcription.

It catalyses the reaction RNA(n) + a ribonucleoside 5'-triphosphate = RNA(n+1) + diphosphate. Promotes RNA polymerase assembly. Latches the N- and C-terminal regions of the beta' subunit thereby facilitating its interaction with the beta and alpha subunits. The sequence is that of DNA-directed RNA polymerase subunit omega from Actinobacillus succinogenes (strain ATCC 55618 / DSM 22257 / CCUG 43843 / 130Z).